The chain runs to 258 residues: Snake venom serine protease catroxase-2 (258 aa).

The signal sequence occupies residues 1–18 (MVLIRVLANLLILQLSYA). The propeptide occupies 19–24 (QKSSEL). The 225-residue stretch at 25–249 (VVGGDECNIN…YNDWIQSIIA (225 aa)) folds into the Peptidase S1 domain. 6 cysteine pairs are disulfide-bonded: Cys-31–Cys-163, Cys-50–Cys-66, Cys-98–Cys-256, Cys-142–Cys-210, Cys-174–Cys-189, and Cys-200–Cys-225. N-linked (GlcNAc...) asparagine glycosylation is present at Asn-44. Active-site charge relay system residues include His-65 and Asp-110. The active-site Charge relay system is the Ser-204.

This sequence belongs to the peptidase S1 family. Snake venom subfamily. Monomer. In terms of tissue distribution, expressed by the venom gland.

The protein localises to the secreted. In terms of biological role, snake venom serine protease that may act in the hemostasis system of the prey. This Crotalus atrox (Western diamondback rattlesnake) protein is Snake venom serine protease catroxase-2.